Consider the following 362-residue polypeptide: Golgi-resident adenosine 3',5'-bisphosphate 3'-phosphatase (362 aa).

Position 1 is an N-acetylmethionine (M1). At 1–12 (MAPMGIRLSPLG) the chain is on the cytoplasmic side. A helical membrane pass occupies residues 13-33 (VAVFCLLGLGVLYHLYSGFLA). Topologically, residues 34–362 (GRFSLFGLGG…LPDLEKTGHK (329 aa)) are lumenal. The segment at 88 to 109 (RESNVLHEKSKGKTREGADDKM) is disordered. D113 serves as the catalytic Proton acceptor. The Mg(2+) site is built by E136, D177, L179, and D180. Residue T182 is the Proton acceptor of the active site. The AMP site is built by S245 and H248. An N-linked (GlcNAc...) asparagine glycan is attached at N262. The AMP site is built by G271 and K275. Residue D303 participates in Mg(2+) binding.

It belongs to the inositol monophosphatase superfamily. Requires Mg(2+) as cofactor. In terms of processing, contains N-linked glycan resistant to endoglycosydase H.

Its subcellular location is the golgi apparatus. It localises to the trans-Golgi network membrane. It catalyses the reaction adenosine 3',5'-bisphosphate + H2O = AMP + phosphate. The protein operates within sulfur metabolism. Its activity is regulated as follows. Strongly inhibited by lithium. Its function is as follows. Exhibits 3'-nucleotidase activity toward adenosine 3',5'-bisphosphate (PAP), namely hydrolyzes adenosine 3',5'-bisphosphate into adenosine 5'-monophosphate (AMP) and a phosphate. May play a role in the formation of skeletal elements derived through endochondral ossification, possibly by clearing adenosine 3',5'-bisphosphate produced by Golgi sulfotransferases during glycosaminoglycan sulfation. Has no activity toward 3'-phosphoadenosine 5'-phosphosulfate (PAPS) or inositol phosphate (IP) substrates including I(1)P, I(1,4)P2, I(1,3,4)P3, I(1,4,5)P3 and I(1,3,4,5)P4. The sequence is that of Golgi-resident adenosine 3',5'-bisphosphate 3'-phosphatase (BPNT2) from Bos taurus (Bovine).